The chain runs to 248 residues: Triosephosphate isomerase (248 aa).

9–11 (NWK) provides a ligand contact to substrate. Histidine 94 serves as the catalytic Electrophile. The active-site Proton acceptor is glutamate 166. Substrate is bound by residues glycine 172, serine 212, and 233-234 (GG).

It belongs to the triosephosphate isomerase family. Homodimer.

The protein resides in the cytoplasm. The catalysed reaction is D-glyceraldehyde 3-phosphate = dihydroxyacetone phosphate. It participates in carbohydrate biosynthesis; gluconeogenesis. Its pathway is carbohydrate degradation; glycolysis; D-glyceraldehyde 3-phosphate from glycerone phosphate: step 1/1. Involved in the gluconeogenesis. Catalyzes stereospecifically the conversion of dihydroxyacetone phosphate (DHAP) to D-glyceraldehyde-3-phosphate (G3P). The protein is Triosephosphate isomerase of Alkaliphilus metalliredigens (strain QYMF).